Reading from the N-terminus, the 831-residue chain is Sodium/hydrogen exchanger 3 (831 aa).

The signal sequence occupies residues 1-28; that stretch reads MWHPALGPGWKPLLALALALTSLRGVRG. Topologically, residues 29–48 are extracellular; that stretch reads IEEEPNSGGSFQIVTFKWHH. Residues 49–71 form a helical membrane-spanning segment; sequence VQDPYIIALWILVASLAKIVFHL. Residues 72 to 79 lie on the Cytoplasmic side of the membrane; sequence SHKVTSVV. Residues 80-99 traverse the membrane as a helical segment; the sequence is PESALLIVLGLVLGGIVWAA. Residues 100 to 108 lie on the Extracellular side of the membrane; that stretch reads DHIASFTLT. Residues 109-126 form a helical membrane-spanning segment; it reads PTLFFFYLLPPIVLDAGY. The Cytoplasmic segment spans residues 127–129; sequence FMP. A helical membrane pass occupies residues 130-165; it reads NRLFFGNLGTILLYAVIGTIWNAATTGLSLYGVFLS. Residues Gly-135, Gly-138, and Thr-139 each contribute to the a 1,2-diacyl-sn-glycero-3-phospho-(1D-myo-inositol) site. Residues 166 to 178 are Extracellular-facing; it reads GLMGELKIGLLDF. A helical transmembrane segment spans residues 179 to 200; it reads LLFGSLIAAVDPVAVLAVFEEV. Over 201–202 the chain is Cytoplasmic; it reads HV. A helical transmembrane segment spans residues 203–234; sequence NEVLFIIVFGESLLNDAVTVVLYNVFESFVTL. The Extracellular portion of the chain corresponds to 235–241; sequence GGDAVTG. A helical transmembrane segment spans residues 242-276; the sequence is VDCVKGIVSFFVVSLGGTLVGVIFAFLLSLVTRFT. Residues 277–278 are Cytoplasmic-facing; the sequence is KH. A helical membrane pass occupies residues 279 to 301; sequence VRIIEPGFVFVISYLSYLTSEML. Residues 302-303 lie on the Extracellular side of the membrane; the sequence is SL. Residues 304–320 form a helical membrane-spanning segment; the sequence is SAILAITFCGICCQKYV. The Cytoplasmic segment spans residues 321-327; it reads KANISEQ. Residues 328-356 traverse the membrane as a helical segment; the sequence is SATTVRYTMKMLASGAETIIFMFLGISAV. The Extracellular portion of the chain corresponds to 357–364; the sequence is DPVIWTWN. Residues 365-386 form a helical membrane-spanning segment; that stretch reads TAFVLLTLVFISVYRAIGVVLQ. Residues 387–399 lie on the Cytoplasmic side of the membrane; the sequence is TWILNRYRMVQLE. A 1,2-diacyl-sn-glycero-3-phospho-(1D-myo-inositol) is bound at residue Met-395. A helical transmembrane segment spans residues 400–423; it reads TIDQVVMSYGGLRGAVAYALVVLL. Over 424–430 the chain is Extracellular; that stretch reads DEKKVKE. A helical transmembrane segment spans residues 431–464; it reads KNLFVSTTLIVVFFTVIFQGLTIKPLVQWLKVKR. The Cytoplasmic portion of the chain corresponds to 465 to 831; that stretch reads SEQREPKLNE…QPASPESTHM (367 aa). The a 1,2-diacyl-sn-glycero-3-phospho-(1D-myo-inositol) site is built by Gln-494, Ile-495, and His-497. Phosphoserine is present on residues Ser-552 and Ser-560. The interval 573-587 is interaction with EZR; sequence RPSTVEASVSYFLRE. The segment at 588–665 is interaction with NHERF4; it reads NVSAVCLDMQ…RKRLESFKSA (78 aa). The interaction with AHCYL1 stretch occupies residues 589–693; that stretch reads VSAVCLDMQS…AQKRRNSSIP (105 aa). 2 positions are modified to phosphoserine: Ser-590 and Ser-605. Ser-661 is subject to Phosphoserine; by SGK1. Residues Ser-716, Ser-807, and Ser-810 each carry the phosphoserine modification. Residues 808–831 form a disordered region; that stretch reads VDSFLQADGPEEQLQPASPESTHM. Polar residues predominate over residues 822 to 831; sequence QPASPESTHM.

Belongs to the monovalent cation:p,roton antiporter 1 (CPA1) transporter (TC 2.A.36) family. In terms of assembly, homodimer. Found in the forms of complex and dynamic macromolecular complexes. Binds NHERF1 and NHERF2. Interacts with NHERF4 and interactions decrease in response to elevated calcium ion levels. Interacts with PDZK1 (via C-terminal PDZ domain). Interacts with CHP1; this interaction increases trafficking and activity at the plasma membrane of SLC9A3. Interacts with CHP2 and SHANK2. Interacts with AHCYL1; the interaction is required for SLC9A3 activity. Interacts with EZR; interaction targets SLC9A3 to the apical membrane. Interacts with SNX27 (via PDZ domains); directs SLC9A3 membrane insertion from early endosomes to the plasma membrane. Post-translationally, phosphorylated by PRKACA at Ser-552 and Ser-605, which inhibits activity. Phosphorylation of Ser-605 is essential for cAMP-mediated inhibition of SLC9A3. Phosphorylation at Ser-661 by SGK1 is associated with increased abundance at the cell membrane. Phosphorylation at Ser-716 by CSNK2A1 regulates SLC9A3 activity through the formation of multiple signaling complexes. In terms of tissue distribution, most abundant in colon and small intestine, followed by kidney and stomach. In kidney, expressed in proximal tubules and outer medulla (at protein level).

It localises to the apical cell membrane. Its subcellular location is the cell membrane. It is found in the recycling endosome membrane. The protein resides in the early endosome membrane. The enzyme catalyses Na(+)(in) + H(+)(out) = Na(+)(out) + H(+)(in). Its activity is regulated as follows. Seems to switch between active and inactive modes in response to various stimuli. Activated directly or indirectly by membrane phosphatidylinositol (PIs). Regulated by a variety of auxiliary proteins, which facilitate the maturation, cell surface expression and function of the transporter. Inhibited specifically by the drug tenapanor. Plasma membrane Na(+)/H(+) antiporter. Exchanges intracellular H(+) ions for extracellular Na(+) in 1:1 stoichiometry, playing a key role in salt and fluid absorption and pH homeostasis. Major apical Na(+)/H(+) exchanger in kidney and intestine playing an important role in renal and intestine Na(+) absorption and blood pressure regulation. This chain is Sodium/hydrogen exchanger 3 (Slc9a3), found in Rattus norvegicus (Rat).